Reading from the N-terminus, the 179-residue chain is Large ribosomal subunit protein uL5 (179 aa).

It belongs to the universal ribosomal protein uL5 family. As to quaternary structure, part of the 50S ribosomal subunit; part of the 5S rRNA/L5/L18/L25 subcomplex. Contacts the 5S rRNA and the P site tRNA. Forms a bridge to the 30S subunit in the 70S ribosome.

Functionally, this is one of the proteins that bind and probably mediate the attachment of the 5S RNA into the large ribosomal subunit, where it forms part of the central protuberance. In the 70S ribosome it contacts protein S13 of the 30S subunit (bridge B1b), connecting the 2 subunits; this bridge is implicated in subunit movement. Contacts the P site tRNA; the 5S rRNA and some of its associated proteins might help stabilize positioning of ribosome-bound tRNAs. This Aromatoleum aromaticum (strain DSM 19018 / LMG 30748 / EbN1) (Azoarcus sp. (strain EbN1)) protein is Large ribosomal subunit protein uL5.